Reading from the N-terminus, the 156-residue chain is Small ribosomal subunit protein uS7 (156 aa).

The protein belongs to the universal ribosomal protein uS7 family. Part of the 30S ribosomal subunit. Contacts proteins S9 and S11.

Its function is as follows. One of the primary rRNA binding proteins, it binds directly to 16S rRNA where it nucleates assembly of the head domain of the 30S subunit. Is located at the subunit interface close to the decoding center, probably blocks exit of the E-site tRNA. The chain is Small ribosomal subunit protein uS7 from Campylobacter curvus (strain 525.92).